A 135-amino-acid chain; its full sequence is Galectin-1 (135 aa).

Position 2 is an N-acetylalanine (alanine 2). In terms of domain architecture, Galectin spans 4–135 (GLVASNLNLK…DFKIKCVAFE (132 aa)). N6-acetyllysine occurs at positions 13 and 29. At serine 30 the chain carries Phosphoserine. Residues 45–49 (HFNPR), histidine 53, asparagine 62, and 69–72 (WGAE) contribute to the a beta-D-galactoside site. At lysine 108 the chain carries N6-acetyllysine; alternate. Residue lysine 108 is modified to N6-succinyllysine; alternate. Residue lysine 128 is modified to N6-acetyllysine.

Homodimer. Binds LGALS3BP. Interacts with CD2, CD3, CD4, CD6, CD7, CD43, ALCAM and CD45. Interacts with laminin (via poly-N-acetyllactosamine). Interacts with SUSD2. Interacts with cargo receptor TMED10; the interaction mediates the translocation from the cytoplasm into the ERGIC (endoplasmic reticulum-Golgi intermediate compartment) and thereby secretion.

Its subcellular location is the secreted. It is found in the extracellular space. The protein resides in the extracellular matrix. The protein localises to the cytoplasm. Its function is as follows. Lectin that binds beta-galactoside and a wide array of complex carbohydrates. Plays a role in regulating apoptosis, cell proliferation and cell differentiation. Inhibits CD45 protein phosphatase activity and therefore the dephosphorylation of Lyn kinase. Strong inducer of T-cell apoptosis. This is Galectin-1 (LGALS1) from Bos taurus (Bovine).